The chain runs to 161 residues: Cyclic pyranopterin monophosphate synthase (161 aa).

Residues 75–77 (LCH) and 113–114 (ME) each bind substrate. Residue D128 is part of the active site.

Belongs to the MoaC family. Homohexamer; trimer of dimers.

The catalysed reaction is (8S)-3',8-cyclo-7,8-dihydroguanosine 5'-triphosphate = cyclic pyranopterin phosphate + diphosphate. The protein operates within cofactor biosynthesis; molybdopterin biosynthesis. Its function is as follows. Catalyzes the conversion of (8S)-3',8-cyclo-7,8-dihydroguanosine 5'-triphosphate to cyclic pyranopterin monophosphate (cPMP). In Cronobacter sakazakii (strain ATCC BAA-894) (Enterobacter sakazakii), this protein is Cyclic pyranopterin monophosphate synthase.